The chain runs to 389 residues: Ribosomal RNA large subunit methyltransferase M (389 aa).

Polar residues predominate over residues M1–T13. Residues M1–S24 are disordered. S-adenosyl-L-methionine is bound by residues S214, A247–G250, D266, D286, and D302. K331 serves as the catalytic Proton acceptor.

The protein belongs to the class I-like SAM-binding methyltransferase superfamily. RNA methyltransferase RlmE family. RlmM subfamily. Monomer.

It is found in the cytoplasm. The catalysed reaction is cytidine(2498) in 23S rRNA + S-adenosyl-L-methionine = 2'-O-methylcytidine(2498) in 23S rRNA + S-adenosyl-L-homocysteine + H(+). Its function is as follows. Catalyzes the 2'-O-methylation at nucleotide C2498 in 23S rRNA. The polypeptide is Ribosomal RNA large subunit methyltransferase M (Hahella chejuensis (strain KCTC 2396)).